The following is a 427-amino-acid chain: uncharacterized protein (427 aa).

It belongs to the CAF1 family.

This is an uncharacterized protein from Schizosaccharomyces pombe (strain 972 / ATCC 24843) (Fission yeast).